Consider the following 55-residue polypeptide: MAKAATIKIKLLSSADTGVFYVTKKNSRTKTDKIVLKKYDPVVRKHVEFRETKIK.

This sequence belongs to the bacterial ribosomal protein bL33 family.

The polypeptide is Large ribosomal subunit protein bL33 (Xanthobacter autotrophicus (strain ATCC BAA-1158 / Py2)).